A 666-amino-acid chain; its full sequence is Threonine--tRNA ligase (666 aa).

The region spanning 7–70 (QQVTLTVTLP…TADCTAEIIT (64 aa)) is the TGS domain. The interval 253–555 (DHRKLGTELE…LIEHTAGNFP (303 aa)) is catalytic. Residues cysteine 351, histidine 402, and histidine 532 each contribute to the Zn(2+) site.

Belongs to the class-II aminoacyl-tRNA synthetase family. As to quaternary structure, homodimer. Zn(2+) serves as cofactor.

The protein resides in the cytoplasm. The enzyme catalyses tRNA(Thr) + L-threonine + ATP = L-threonyl-tRNA(Thr) + AMP + diphosphate + H(+). Functionally, catalyzes the attachment of threonine to tRNA(Thr) in a two-step reaction: L-threonine is first activated by ATP to form Thr-AMP and then transferred to the acceptor end of tRNA(Thr). Also edits incorrectly charged L-seryl-tRNA(Thr). In Chlorobium phaeovibrioides (strain DSM 265 / 1930) (Prosthecochloris vibrioformis (strain DSM 265)), this protein is Threonine--tRNA ligase.